Consider the following 454-residue polypeptide: Protein translocase subunit SecY (454 aa).

10 consecutive transmembrane segments (helical) span residues 43-63 (LTIA…LPYI), 97-117 (FTLG…AFVI), 144-164 (TLLL…AFIF), 168-188 (ILKL…ILWI), 201-221 (SSFL…GMSF), 226-246 (IFSF…WAAI), 289-309 (PVVF…YILL), 334-354 (IVEA…IIDP), 390-410 (LIGA…GFVF), and 414-434 (IFKG…TEIL).

Belongs to the SecY/SEC61-alpha family. As to quaternary structure, component of the plastid Sec protein translocase complex, which is composed of at least SecY and SecE.

It localises to the plastid. The protein localises to the chloroplast thylakoid membrane. Functionally, the central subunit of the protein translocation channel SecYE. Consists of two halves formed by TMs 1-5 and 6-10. These two domains form a lateral gate at the front which open onto the bilayer between TMs 2 and 7, and are clamped together by SecE at the back. The channel is closed by both a pore ring composed of hydrophobic SecY resides and a short helix (helix 2A) on the extracellular side of the membrane which forms a plug. The polypeptide is Protein translocase subunit SecY (Heterosigma akashiwo (strain NIES-293 / 8280G21-1)).